Reading from the N-terminus, the 249-residue chain is Type I iodothyronine deiodinase (249 aa).

The Extracellular segment spans residues 1 to 12; sequence MGLPRPGLWLKR. A helical; Signal-anchor for type III membrane protein transmembrane segment spans residues 13-33; it reads LWVLVQVAVEVAVGKVLMTLF. Topologically, residues 34–249 are cytoplasmic; the sequence is PERVKQNILA…VRAVLEELHS (216 aa). Residue Sec-126 is part of the active site. Position 126 (Sec-126) is a non-standard amino acid, selenocysteine.

It belongs to the iodothyronine deiodinase family. In terms of assembly, predominantly monomer. Can form homodimers but homodimerization is not essential for enzyme activity.

The protein localises to the cell membrane. Its subcellular location is the endoplasmic reticulum membrane. It localises to the basolateral cell membrane. The enzyme catalyses 3,3',5-triiodo-L-thyronine + iodide + A + H(+) = L-thyroxine + AH2. It carries out the reaction 3,3',5'-triiodo-L-thyronine + iodide + A + H(+) = L-thyroxine + AH2. The catalysed reaction is 3,3'-diiodo-L-thyronine + iodide + A + H(+) = 3,3',5'-triiodo-L-thyronine + AH2. It catalyses the reaction 3,3'-diiodo-L-thyronine + iodide + A + H(+) = 3,3',5-triiodo-L-thyronine + AH2. The enzyme catalyses 3'-iodo-L-thyronine + iodide + A + H(+) = 3',5'-diiodo-L-thyronine + AH2. It carries out the reaction 3-iodo-L-thyronine + iodide + A + H(+) = 3,5-diiodo-L-thyronine + AH2. The catalysed reaction is 3-iodo-L-thyronine + iodide + A + H(+) = 3,3'-diiodo-L-thyronine + AH2. It catalyses the reaction 3,3'-diiodothyronamine + iodide + A + H(+) = 3,3',5'-triiodothyronamine + AH2. The enzyme catalyses 3'-iodothyronamine + iodide + A + H(+) = 3',5'-diiodothyronamine + AH2. It carries out the reaction 3-iodothyronamine + iodide + A + H(+) = 3,3'-diiodothyronamine + AH2. The catalysed reaction is 3,3'-diiodothyronamine + iodide + A + H(+) = 3,3',5-triiodothyronamine + AH2. It catalyses the reaction 3-iodothyronamine + iodide + A + H(+) = 3,5-diiodothyronamine + AH2. The enzyme catalyses 3,3'-diiodo-L-thyronine sulfate + iodide + A + H(+) = 3,3',5'-triiodo-L-thyronine sulfate + AH2. It carries out the reaction 3,3',5'-triiodo-L-thyronine sulfate + iodide + A + H(+) = L-thyroxine sulfate + AH2. The catalysed reaction is 3,3'-diiodo-L-thyronine sulfate + iodide + A + H(+) = 3,3',5-triiodo-L-thyronine sulfate + AH2. Its function is as follows. Plays a crucial role in the metabolism of thyroid hormones (TH) and has specific roles in TH activation and inactivation by deiodination. Catalyzes the deiodination of L-thyroxine (T4) to 3,5,3'-triiodothyronine (T3) via outer-ring deiodination (ORD) and of T4 to 3,3',5'-triiodothyronine (rT3) via inner-ring deiodination (IRD). Catalyzes the deiodiantion of rT3 to 3,3'-diiodothyronine (3,3'-T2) and 3',5'-diiodothyronine (3',5'-T2) to 3'-monoiodothyronine (3'-T1) via ORD. Catalyzes the deiodination of T3 to 3,3'-T2, 3,5-diiodothyronine (3,5-T2) to 3-monoiodothyronine (3-T1) and 3,3'-T2 to 3-T1 via IRD. Catalyzes the phenolic ring deiodinations of 3,3',5'-triiodothyronamine, 3',5'-diiodothyronamine and 3,3'-diiodothyronamine as well as tyrosyl ring deiodinations of 3,5,3'-triiodothyronamine and 3,5-diiodothyronamine. Catalyzes the deiodination of L-thyroxine sulfate and 3,3',5-triiodo-L-thyronine sulfate via IRD and of 3,3',5'-triiodo-L-thyronine sulfate via ORD. This chain is Type I iodothyronine deiodinase (DIO1), found in Oryctolagus cuniculus (Rabbit).